The chain runs to 215 residues: Adenylate kinase (215 aa).

An ATP-binding site is contributed by 10–15; the sequence is GAGKGT. The NMP stretch occupies residues 30–59; sequence STGDMLRAAVKAGTELGLKAKSVMDSGGLV. AMP contacts are provided by residues threonine 31, arginine 36, 57 to 59, 85 to 88, and glutamine 92; these read GLV and GFPR. Residues 122–159 form an LID region; the sequence is GRRVHEASGRVYHTVYNPPKIAGKDDITGEDLVQRKDD. ATP is bound by residues arginine 123 and 132–133; that span reads VY. Residues arginine 156 and arginine 167 each contribute to the AMP site. Residue glycine 201 coordinates ATP.

The protein belongs to the adenylate kinase family. Monomer.

Its subcellular location is the cytoplasm. It carries out the reaction AMP + ATP = 2 ADP. It participates in purine metabolism; AMP biosynthesis via salvage pathway; AMP from ADP: step 1/1. Catalyzes the reversible transfer of the terminal phosphate group between ATP and AMP. Plays an important role in cellular energy homeostasis and in adenine nucleotide metabolism. The polypeptide is Adenylate kinase (Pseudomonas fluorescens (strain ATCC BAA-477 / NRRL B-23932 / Pf-5)).